The primary structure comprises 459 residues: Trichothecene 3-O-acetyltransferase TRI101 (459 aa).

Residues D218 and I221 each contribute to the Ca(2+) site. Residues K253, 266-269 (FVST), D302, Q318, and R343 contribute to the CoA site. D376 contributes to the Ca(2+) binding site. Residues S386 and K390 each contribute to the CoA site. Ca(2+) is bound at residue E449.

Belongs to the trichothecene 3-O-acetyltransferase family.

Its pathway is sesquiterpene biosynthesis; trichothecene biosynthesis. In terms of biological role, 3-O-acetyltransferase involved in the biosynthesis of trichothecenes, a very large family of chemically related bicyclic sesquiterpene compounds acting as mycotoxins, including T2-toxin. The biosynthesis of trichothecenes begins with the cyclization of farnesyl diphosphate to trichodiene and is catalyzed by the trichodiene synthase TRI5. Trichodiene undergoes a series of oxygenations catalyzed by the cytochrome P450 monooxygenase TRI4. TRI4 controls the addition of four oxygens at C-2, C-3, C-11, and the C-12, C-13-epoxide to form the intermediate isotrichotriol. Isotrichotriol then undergoes a non-enzymatic isomerization and cyclization to form isotrichodermol. During this process, the oxygen at the C-2 position becomes the pyran ring oxygen and the hydroxyl group at C-11 is lost. More complex type A trichothecenes are built by modifying isotrichodermol through a series of paired hydroxylation and acetylation or acylation steps. Isotrichodermol is converted to isotrichodermin by the acetyltransferase TRI101. TRI101 encodes a C-3 transacetylase that acts as a self-protection or resistance factor during biosynthesis and that the presence of a free C-3 hydroxyl group is a key component of Fusarium trichothecene phytotoxicity. A second hydroxyl group is added to C-15 by the trichothecene C-15 hydroxylase TRI11, producing 15-decalonectrin, which is then acetylated by TRI3, producing calonectrin. A third hydroxyl group is added at C-4 by the cytochrome P450 monooxygenase TRI13, converting calonectrin to 3,15-diacetoxyspirpenol, which is subsequently acetylated bythe acetyltransferase TRI7. A fourth hydroxyl group is added to C-8 by the cytochrome P450 monooxygenase TRI1, followed by the addition of an isovaleryl moiety by TRI16. Finally, the acetyl group is removed from the C-3 position by the trichothecene C-3 esterase TRI8 to produce T-2 toxin. This chain is Trichothecene 3-O-acetyltransferase TRI101, found in Fusarium sporotrichioides.